Reading from the N-terminus, the 187-residue chain is T-cell receptor-associated transmembrane adapter 1 (187 aa).

The Extracellular segment spans residues 1–7 (MSGSSGC). Residues 8-28 (PFFLWGLLAFLGLALVISLIF) form a helical; Signal-anchor for type III membrane protein membrane-spanning segment. Residues 29–187 (NISHYVEKQR…LIRAKREPVI (159 aa)) lie on the Cytoplasmic side of the membrane. A Phosphoserine modification is found at serine 46. Position 80 is a phosphotyrosine (tyrosine 80). Residues 80–83 (YEQM) form an interaction with PIK3R1 region. The disordered stretch occupies residues 117–138 (SVKGKRRRPRKQNTNVSDRGKD).

As to quaternary structure, homodimer; disulfide-linked. Interacts with CD3Z. When phosphorylated, interacts with PIK3R1. In terms of processing, phosphorylated on tyrosines upon TCR activation. Present in T-cells (at protein level).

The protein resides in the cell membrane. Functionally, stabilizes the TCR (T-cell antigen receptor)/CD3 complex at the surface of T-cells. The chain is T-cell receptor-associated transmembrane adapter 1 (Trat1) from Mus musculus (Mouse).